We begin with the raw amino-acid sequence, 275 residues long: Large ribosomal subunit protein uL2 (275 aa).

Disordered stretches follow at residues 38 to 59 (TRGSGRNNNGHITVRHRGGGHK) and 223 to 275 (VAMN…RKRK). A compositionally biased stretch (basic residues) spans 50 to 59 (TVRHRGGGHK). The span at 229 to 244 (DHPHGGGEGRTGEARE) shows a compositional bias: basic and acidic residues.

This sequence belongs to the universal ribosomal protein uL2 family. In terms of assembly, part of the 50S ribosomal subunit. Forms a bridge to the 30S subunit in the 70S ribosome.

In terms of biological role, one of the primary rRNA binding proteins. Required for association of the 30S and 50S subunits to form the 70S ribosome, for tRNA binding and peptide bond formation. It has been suggested to have peptidyltransferase activity; this is somewhat controversial. Makes several contacts with the 16S rRNA in the 70S ribosome. This Bordetella bronchiseptica (strain ATCC BAA-588 / NCTC 13252 / RB50) (Alcaligenes bronchisepticus) protein is Large ribosomal subunit protein uL2.